Here is a 901-residue protein sequence, read N- to C-terminus: Putative serine/threonine-protein kinase YPL150W (901 aa).

One can recognise a Protein kinase domain in the interval 41–287 (YKILKQIGEG…LSQVLRHPFL (247 aa)). ATP-binding positions include 47 to 55 (IGEGSFGKV) and Lys-70. Residue Asp-157 is the Proton acceptor of the active site. Ser-456 carries the post-translational modification Phosphoserine. Residues 500-530 (APSSGSFLKKNSGSIQKSRTDTVANPSRTES) form a disordered region. Ser-533 bears the Phosphoserine mark. Over residues 588–599 (SSISSEISQTST) the composition is skewed to low complexity. Disordered regions lie at residues 588-629 (SSIS…NRPL) and 745-770 (TQRP…SSKR). The span at 600-613 (GNYDSESAENSRSI) shows a compositional bias: polar residues. The segment covering 759–770 (RHGKNARRSSKR) has biased composition (basic residues).

Belongs to the protein kinase superfamily. Ser/Thr protein kinase family.

The catalysed reaction is L-seryl-[protein] + ATP = O-phospho-L-seryl-[protein] + ADP + H(+). The enzyme catalyses L-threonyl-[protein] + ATP = O-phospho-L-threonyl-[protein] + ADP + H(+). Putative serine/threonine-protein kinase. The protein is Putative serine/threonine-protein kinase YPL150W of Saccharomyces cerevisiae (strain ATCC 204508 / S288c) (Baker's yeast).